A 65-amino-acid chain; its full sequence is Large ribosomal subunit protein uL29 (65 aa).

The protein belongs to the universal ribosomal protein uL29 family.

The protein is Large ribosomal subunit protein uL29 of Methylococcus capsulatus (strain ATCC 33009 / NCIMB 11132 / Bath).